An 88-amino-acid chain; its full sequence is MHESTILSAGSTNPFNRIVSAVMLALIELYRRWISPLIGPRCRFIPTCSAYGIEAIQRHGPWRGGWLTLRRLLRCHPFTPCGCDPVPD.

Belongs to the UPF0161 family.

The protein localises to the cell inner membrane. In terms of biological role, could be involved in insertion of integral membrane proteins into the membrane. The sequence is that of Putative membrane protein insertion efficiency factor from Synechococcus sp. (strain CC9311).